Here is a 335-residue protein sequence, read N- to C-terminus: Methionine import ATP-binding protein MetN (335 aa).

One can recognise an ABC transporter domain in the interval 2–241 (IEFQRLHKSY…PKHVTTRRFV (240 aa)). 38-45 (GHSGAGKS) is a binding site for ATP.

It belongs to the ABC transporter superfamily. Methionine importer (TC 3.A.1.24) family. In terms of assembly, the complex is composed of two ATP-binding proteins (MetN), two transmembrane proteins (MetI) and a solute-binding protein (MetQ).

It is found in the cell inner membrane. The catalysed reaction is L-methionine(out) + ATP + H2O = L-methionine(in) + ADP + phosphate + H(+). The enzyme catalyses D-methionine(out) + ATP + H2O = D-methionine(in) + ADP + phosphate + H(+). In terms of biological role, part of the ABC transporter complex MetNIQ involved in methionine import. Responsible for energy coupling to the transport system. In Xanthomonas oryzae pv. oryzae (strain KACC10331 / KXO85), this protein is Methionine import ATP-binding protein MetN.